The sequence spans 726 residues: DNA-directed RNA polymerase subunit beta N-terminal section (726 aa).

It belongs to the RNA polymerase beta chain family. As to quaternary structure, in plastids the minimal PEP RNA polymerase catalytic core is composed of four subunits: alpha, beta, beta', and beta''. When a (nuclear-encoded) sigma factor is associated with the core the holoenzyme is formed, which can initiate transcription.

The protein localises to the plastid. Its subcellular location is the chloroplast. The catalysed reaction is RNA(n) + a ribonucleoside 5'-triphosphate = RNA(n+1) + diphosphate. Its function is as follows. DNA-dependent RNA polymerase catalyzes the transcription of DNA into RNA using the four ribonucleoside triphosphates as substrates. The polypeptide is DNA-directed RNA polymerase subunit beta N-terminal section (rpoB1) (Tetradesmus obliquus (Green alga)).